We begin with the raw amino-acid sequence, 488 residues long: Cobyric acid synthase (488 aa).

A GATase cobBQ-type domain is found at 248 to 435 (VLKVVVPVLP…LHGLFESPAA (188 aa)). Cysteine 329 acts as the Nucleophile in catalysis. Residue histidine 427 is part of the active site.

This sequence belongs to the CobB/CobQ family. CobQ subfamily.

Its pathway is cofactor biosynthesis; adenosylcobalamin biosynthesis. Functionally, catalyzes amidations at positions B, D, E, and G on adenosylcobyrinic A,C-diamide. NH(2) groups are provided by glutamine, and one molecule of ATP is hydrogenolyzed for each amidation. This chain is Cobyric acid synthase, found in Pseudomonas fluorescens (strain Pf0-1).